The following is a 400-amino-acid chain: Outer membrane protein alpha (400 aa).

A signal peptide spans 1-20 (MKRVLLTVAMLSVFFSAMFA). In terms of domain architecture, SLH spans 21–81 (FFPDVPKDHW…DFIEQKMLAG (61 aa)). The stretch at 85-379 (DLAQVVGNLS…ESVKAYNRNL (295 aa)) forms a coiled coil. 3 tandem repeats follow at residues 208-232 (VNLH…LNNK), 251-275 (VELH…LNKK), and 326-350 (VDLH…LNMK). Residues 208–350 (VNLHEKDIIN…SSLEEDLNMK (143 aa)) are 3 X 25 AA approximate repeat. The chain crosses the membrane as a helical span at residues 380 to 400 (SILTGAFFGILGLILIAISGK).

In terms of assembly, homotetramer.

It is found in the cell outer membrane. Its function is as follows. Links the outer membrane to the inner membrane. Long fibrous protein that could serve to separate the two membranes. The polypeptide is Outer membrane protein alpha (omp-alpha) (Thermotoga maritima (strain ATCC 43589 / DSM 3109 / JCM 10099 / NBRC 100826 / MSB8)).